The following is a 399-amino-acid chain: Serine/threonine-protein kinase PKZ1 (399 aa).

Positions 30-50 are disordered; sequence PMQCAYQTQSHSNPEGAKRGR. One can recognise a Protein kinase domain in the interval 92–371; that stretch reads WQLFDQIGAG…ADQMLQHPWM (280 aa). ATP contacts are provided by residues 98–106 and Lys-121; that span reads IGAGAFGVV. Asp-219 (proton acceptor) is an active-site residue.

The protein belongs to the protein kinase superfamily. CAMK Ser/Thr protein kinase family.

The catalysed reaction is L-seryl-[protein] + ATP = O-phospho-L-seryl-[protein] + ADP + H(+). It catalyses the reaction L-threonyl-[protein] + ATP = O-phospho-L-threonyl-[protein] + ADP + H(+). Its function is as follows. May regulate an early stage of the zoospore pathway. This Phytophthora infestans (strain T30-4) (Potato late blight agent) protein is Serine/threonine-protein kinase PKZ1.